We begin with the raw amino-acid sequence, 340 residues long: Trimethylamine N-oxide transport system ATP-binding protein TmoW (340 aa).

The 237-residue stretch at 32–268 (GRSFDDIRAD…PTTGYVAKFT (237 aa)) folds into the ABC transporter domain. 64 to 71 (GLSGSGKS) lines the ATP pocket.

It belongs to the ABC transporter superfamily. The complex is probably composed of two ATP-binding proteins (TmoW), two transmembrane proteins (TmoV) and a solute-binding protein (TmoX).

It localises to the cell inner membrane. It carries out the reaction a quaternary ammonium(out) + ATP + H2O = a quaternary ammonium(in) + ADP + phosphate + H(+). Part of the ABC transporter complex TmoXWV involved in trimethylamine N-oxide (TMAO) import. Responsible for energy coupling to the transport system. Is specific for TMAO and essential for TMAO metabolism. In Ruegeria pomeroyi (strain ATCC 700808 / DSM 15171 / DSS-3) (Silicibacter pomeroyi), this protein is Trimethylamine N-oxide transport system ATP-binding protein TmoW.